Here is a 698-residue protein sequence, read N- to C-terminus: MARTTPIERYRNIGIMAHIDAGKTTTTERILFYTGVSHKIGEVHDGAAIMDWMEQEQERGITITSAATTCFWRGMDGSFPEYRINIIDTPGHVDFTIEVERSLRVLDGACAIFCAVGGVEPQSETVWRQADKYGVPRLAFVNKMDRAGADFLRVVDQIRSRLGGSPVPVQLPIGAEDEFKGVVDLLRMKAIWWDDSTQGMRFSLGDVPAEMVAACVAWREKMVEAAAEASEDLMEKYLEGGELTVEEIKRGLRVRTLANEIVPVLCGSAFKNKGVQAMLDAVVDYLPSPVDTPPVVGIGEGGLESSRKSCDNASFSALAFKIATDPYVGVLTFIRVYSGVLSSGDTVYNPVKDRRERIGRLVQMHANNREEVKEVRAGDIAAAIGLKDVTTGDTLCDPKDVITLERMEFPEPVISVAVEPKTKADQEKMGIALNKLAQEDPSFRVRTDEESGQTIISGMGELHLEIIVDRMKREFGVDANVGAPQVAYRETIRKAVEQEGKYVRQTGGRGQYGHVWLRIEPLDPGGGYEFVNGIVGGVVPKEYIPAVDKGIQEQLQNGVLAGFPVVDVRVTLFDGSYHDVDSSEMAFKIAGSMAFKEGARKASPVLLEPIMKVEVVTPEEYMGDVVGDINRRRGIVQGMDEVPAGKVIRCEVPLSEMFGYATDLRSATQGRATYSMHFEKYVEAPTHVADAVIKKSVS.

The region spanning 8–290 (ERYRNIGIMA…AVVDYLPSPV (283 aa)) is the tr-type G domain. Residues 17–24 (AHIDAGKT), 88–92 (DTPGH), and 142–145 (NKMD) contribute to the GTP site.

It belongs to the TRAFAC class translation factor GTPase superfamily. Classic translation factor GTPase family. EF-G/EF-2 subfamily.

Its subcellular location is the cytoplasm. In terms of biological role, catalyzes the GTP-dependent ribosomal translocation step during translation elongation. During this step, the ribosome changes from the pre-translocational (PRE) to the post-translocational (POST) state as the newly formed A-site-bound peptidyl-tRNA and P-site-bound deacylated tRNA move to the P and E sites, respectively. Catalyzes the coordinated movement of the two tRNA molecules, the mRNA and conformational changes in the ribosome. This chain is Elongation factor G 2, found in Methylococcus capsulatus (strain ATCC 33009 / NCIMB 11132 / Bath).